The following is a 406-amino-acid chain: Arginine deiminase (406 aa).

The active-site Amidino-cysteine intermediate is Cys-396.

The protein belongs to the arginine deiminase family.

Its subcellular location is the cytoplasm. The catalysed reaction is L-arginine + H2O = L-citrulline + NH4(+). The protein operates within amino-acid degradation; L-arginine degradation via ADI pathway; carbamoyl phosphate from L-arginine: step 1/2. This Vibrio vulnificus (strain YJ016) protein is Arginine deiminase.